We begin with the raw amino-acid sequence, 204 residues long: Large ribosomal subunit protein mL67 (204 aa).

Belongs to the mitochondrion-specific ribosomal protein mL67 family.

It is found in the nucleus. It localises to the mitochondrion. Functionally, transcription factor involved in regulation of RNA polymerase II-dependent transcription. Also involved in regulation of mitochondrial DNA recombination, maintenance and repair, and generation of homoplasmic cells. This Yarrowia lipolytica (strain CLIB 122 / E 150) (Yeast) protein is Large ribosomal subunit protein mL67 (MHR1).